The chain runs to 542 residues: GMP synthase [glutamine-hydrolyzing] (542 aa).

The region spanning 28–218 (MIVILDFGSQ…VYHICECEPT (191 aa)) is the Glutamine amidotransferase type-1 domain. Cys-105 functions as the Nucleophile in the catalytic mechanism. Active-site residues include His-192 and Glu-194. One can recognise a GMPS ATP-PPase domain in the interval 219–417 (WTTEAFVEEA…IGLPEEIVRR (199 aa)). 246–252 (SGGVDSS) serves as a coordination point for ATP.

In terms of assembly, homodimer.

It catalyses the reaction XMP + L-glutamine + ATP + H2O = GMP + L-glutamate + AMP + diphosphate + 2 H(+). It participates in purine metabolism; GMP biosynthesis; GMP from XMP (L-Gln route): step 1/1. Its function is as follows. Catalyzes the synthesis of GMP from XMP. The chain is GMP synthase [glutamine-hydrolyzing] from Gloeothece citriformis (strain PCC 7424) (Cyanothece sp. (strain PCC 7424)).